The sequence spans 348 residues: Probable purine nucleoside permease C285.05 (348 aa).

The first 21 residues, 1–21 (MLFLKLVASVLALMTIVPAQA), serve as a signal peptide directing secretion.

The protein belongs to the NUP family.

The protein resides in the endoplasmic reticulum. In terms of biological role, probable nucleoside permease that transports adenosine and guanosine. The polypeptide is Probable purine nucleoside permease C285.05 (Schizosaccharomyces pombe (strain 972 / ATCC 24843) (Fission yeast)).